A 136-amino-acid polypeptide reads, in one-letter code: Neuropeptide CCHamide-2 (136 aa).

Residues 1-24 (MKSTISLLLVVICTVVLAAQQSQA) form the signal peptide. A disulfide bridge connects residues Cys-28 and Cys-35. His-39 carries the histidine amide modification. Residues 42-78 (RSLSPGSGSGTGVGGGMGEAASGGQEPDYVRPNGLLP) form a disordered region. A propeptide spanning residues 43 to 136 (SLSPGSGSGT…ANSAELNGVN (94 aa)) is cleaved from the precursor. Over residues 48–59 (SGSGTGVGGGMG) the composition is skewed to gly residues.

As to expression, expressed in endocrine cells of the larval midgut (at protein level). Also expressed in endocrine cells of the midgut of adult males and females (at protein level). In the midgut, expression occurs mainly in the anterior region (at protein level). In the larval central nervous system, expressed in about 40 neurons in the brain hemispheres and ventral nerve cord (at protein level). Highly expressed in larval and adult gut with low levels in larval and adult brain. Very little expression in the larval fat body. However, another study shows high levels of expression in the larval fat body as well as the larval gut with low levels in the larval central nervous system.

Its subcellular location is the secreted. Ligand for the CCHamide-2 receptor CCHa2-R. In one study, shown to be an orexigenic peptide which induces appetite and stimulates food intake, leading to the release of insulin-like peptides which stimulate growth. In another study, shown to be a nutrient-sensitive peptide derived from peripheral tissues which controls growth by directly regulating the production and release of insulin-like peptides. This Drosophila melanogaster (Fruit fly) protein is Neuropeptide CCHamide-2.